A 198-amino-acid chain; its full sequence is Recombination protein RecR (198 aa).

The C4-type zinc-finger motif lies at 57–72; that stretch reads CSICGRLTDDDPCSIC. Residues 80–175 form the Toprim domain; it reads TTILVLEDSR…KVTRLARGLA (96 aa).

Belongs to the RecR family.

Functionally, may play a role in DNA repair. It seems to be involved in an RecBC-independent recombinational process of DNA repair. It may act with RecF and RecO. The polypeptide is Recombination protein RecR (Streptococcus pneumoniae (strain 70585)).